We begin with the raw amino-acid sequence, 296 residues long: uncharacterized protein (296 aa).

A helical membrane pass occupies residues Met-1–Phe-21.

The protein resides in the membrane. This is an uncharacterized protein from Caenorhabditis elegans.